The following is an 859-amino-acid chain: DNA mismatch repair protein MutS (859 aa).

622–629 (GPNMGGKS) is an ATP binding site.

It belongs to the DNA mismatch repair MutS family.

In terms of biological role, this protein is involved in the repair of mismatches in DNA. It is possible that it carries out the mismatch recognition step. This protein has a weak ATPase activity. This chain is DNA mismatch repair protein MutS, found in Coxiella burnetii (strain Dugway 5J108-111).